The chain runs to 486 residues: Malonate-semialdehyde dehydrogenase 1 (486 aa).

5 residues coordinate NAD(+): phenylalanine 154, lysine 178, glutamate 181, arginine 182, and serine 231. Cysteine 286 serves as the catalytic Nucleophile. Glutamate 386 lines the NAD(+) pocket.

This sequence belongs to the aldehyde dehydrogenase family. IolA subfamily. Homotetramer.

It carries out the reaction 3-oxopropanoate + NAD(+) + CoA + H2O = hydrogencarbonate + acetyl-CoA + NADH + H(+). It catalyses the reaction 2-methyl-3-oxopropanoate + NAD(+) + CoA + H2O = propanoyl-CoA + hydrogencarbonate + NADH + H(+). The protein operates within polyol metabolism; myo-inositol degradation into acetyl-CoA; acetyl-CoA from myo-inositol: step 7/7. Its function is as follows. Catalyzes the oxidation of malonate semialdehyde (MSA) and methylmalonate semialdehyde (MMSA) into acetyl-CoA and propanoyl-CoA, respectively. Is involved in a myo-inositol catabolic pathway. Bicarbonate, and not CO2, is the end-product of the enzymatic reaction. This chain is Malonate-semialdehyde dehydrogenase 1, found in Oceanobacillus iheyensis (strain DSM 14371 / CIP 107618 / JCM 11309 / KCTC 3954 / HTE831).